Here is a 352-residue protein sequence, read N- to C-terminus: UDP-N-acetylglucosamine--N-acetylmuramyl-(pentapeptide) pyrophosphoryl-undecaprenol N-acetylglucosamine transferase (352 aa).

UDP-N-acetyl-alpha-D-glucosamine-binding residues include serine 195 and glutamine 287.

Belongs to the glycosyltransferase 28 family. MurG subfamily.

The protein localises to the cell membrane. The enzyme catalyses Mur2Ac(oyl-L-Ala-gamma-D-Glu-L-Lys-D-Ala-D-Ala)-di-trans,octa-cis-undecaprenyl diphosphate + UDP-N-acetyl-alpha-D-glucosamine = beta-D-GlcNAc-(1-&gt;4)-Mur2Ac(oyl-L-Ala-gamma-D-Glu-L-Lys-D-Ala-D-Ala)-di-trans,octa-cis-undecaprenyl diphosphate + UDP + H(+). The protein operates within cell wall biogenesis; peptidoglycan biosynthesis. Functionally, cell wall formation. Catalyzes the transfer of a GlcNAc subunit on undecaprenyl-pyrophosphoryl-MurNAc-pentapeptide (lipid intermediate I) to form undecaprenyl-pyrophosphoryl-MurNAc-(pentapeptide)GlcNAc (lipid intermediate II). The protein is UDP-N-acetylglucosamine--N-acetylmuramyl-(pentapeptide) pyrophosphoryl-undecaprenol N-acetylglucosamine transferase of Streptococcus pneumoniae (strain CGSP14).